Here is a 535-residue protein sequence, read N- to C-terminus: Putative subtilisin-like proteinase 2 (535 aa).

An N-terminal signal peptide occupies residues 1-17; the sequence is MFFVGVAVLAALQSVWG. The 255-residue stretch at 221-475 folds into the Peptidase S8 domain; it reads NWIFRVLQIK…IPRLGCKGRI (255 aa). Active-site charge relay system residues include D255 and H277. A disulfide bridge links C369 with C400. The active-site Charge relay system is S420. Residues 489 to 509 traverse the membrane as a helical segment; the sequence is IVPLVFVVLITSALLYLLLIG.

The protein belongs to the peptidase S8 family.

The protein resides in the membrane. May be involved in the degradation of proteins for nutrient acquisition or possess a regulatory function by proteolytic activation of proproteins. The sequence is that of Putative subtilisin-like proteinase 2 (SPL2) from Encephalitozoon cuniculi (strain GB-M1) (Microsporidian parasite).